The following is a 338-amino-acid chain: Solute carrier family 35 member G5 (338 aa).

The tract at residues 1–27 is disordered; sequence MAGSHPYFNLPDSTHPSPPSAPPSLRW. 9 helical membrane-spanning segments follow: residues 37-57, 67-87, 102-122, 160-180, 190-210, 221-241, 250-270, 281-301, and 305-325; these read TNGLLVALLGGGLPAGFVGPL, LPSLELLICRCLFHLPIALLL, GWACFCALLNVLSIGCAYSAV, CGLLGSILGLIIILGPGLWTL, TLGYVQAFLGGLALSLGLLVY, TVAFLSGLVGLLGCVPGLFVL, LLSWSCVGAEGILALVSFTCV, LVCAVLHSEVVVALILQYYML, and VALSDIMGAGVVLGSIAIITA. The EamA 1 domain maps to 49–174; sequence LPAGFVGPLS…SILGLIIILG (126 aa). The EamA 2 domain occupies 272-325; the sequence is YAVTKAHPALVCAVLHSEVVVALILQYYMLHETVALSDIMGAGVVLGSIAIITA.

It belongs to the SLC35G solute transporter family. In terms of tissue distribution, expressed in placenta and testis.

It is found in the membrane. The polypeptide is Solute carrier family 35 member G5 (SLC35G5) (Homo sapiens (Human)).